The following is an 80-amino-acid chain: UPF0125 protein PD_1376 (80 aa).

It belongs to the UPF0125 (RnfH) family.

This is UPF0125 protein PD_1376 from Xylella fastidiosa (strain Temecula1 / ATCC 700964).